Reading from the N-terminus, the 319-residue chain is Glycine--tRNA ligase alpha subunit (319 aa).

The protein belongs to the class-II aminoacyl-tRNA synthetase family. As to quaternary structure, tetramer of two alpha and two beta subunits.

Its subcellular location is the cytoplasm. It catalyses the reaction tRNA(Gly) + glycine + ATP = glycyl-tRNA(Gly) + AMP + diphosphate. This is Glycine--tRNA ligase alpha subunit from Coxiella burnetii (strain CbuK_Q154) (Coxiella burnetii (strain Q154)).